Consider the following 173-residue polypeptide: Adenine phosphoribosyltransferase (173 aa).

Belongs to the purine/pyrimidine phosphoribosyltransferase family. As to quaternary structure, homodimer.

The protein resides in the cytoplasm. The enzyme catalyses AMP + diphosphate = 5-phospho-alpha-D-ribose 1-diphosphate + adenine. It functions in the pathway purine metabolism; AMP biosynthesis via salvage pathway; AMP from adenine: step 1/1. Functionally, catalyzes a salvage reaction resulting in the formation of AMP, that is energically less costly than de novo synthesis. This chain is Adenine phosphoribosyltransferase, found in Listeria monocytogenes serovar 1/2a (strain ATCC BAA-679 / EGD-e).